A 793-amino-acid chain; its full sequence is Acetyl-CoA decarbonylase/synthase complex subunit alpha (793 aa).

[4Fe-4S] cluster is bound by residues cysteine 55, cysteine 58, cysteine 63, and cysteine 73. Histidine 96 is a CO binding site. The [Ni-4Fe-4S] cluster site is built by histidine 229, cysteine 257, and cysteine 309. 4Fe-4S ferredoxin-type domains are found at residues 393–422 and 432–461; these read EQQFKDTLATCTECNQCAFVCPPHIRISEM and EPFSSTYEVCVGCQRCEQTCPQEIPILKLY. Residues cysteine 403, cysteine 406, cysteine 409, cysteine 413, cysteine 441, cysteine 444, cysteine 447, and cysteine 451 each contribute to the [4Fe-4S] cluster site. Residues cysteine 509, cysteine 538, and cysteine 573 each coordinate [Ni-4Fe-4S] cluster.

The protein belongs to the Ni-containing carbon monoxide dehydrogenase family. Heterotetramer of two alpha and two epsilon subunits. The ACDS complex is made up of alpha, epsilon, beta, gamma and delta subunits with a probable stoichiometry of (alpha(2)epsilon(2))(4)-beta(8)-(gamma(1)delta(1))(8). [4Fe-4S] cluster serves as cofactor. It depends on [Ni-4Fe-4S] cluster as a cofactor.

It catalyses the reaction CO + 2 oxidized [2Fe-2S]-[ferredoxin] + H2O = 2 reduced [2Fe-2S]-[ferredoxin] + CO2 + 2 H(+). In terms of biological role, part of the ACDS complex that catalyzes the reversible cleavage of acetyl-CoA, allowing autotrophic growth from CO(2). The alpha-epsilon subcomponent functions as a carbon monoxide dehydrogenase. The protein is Acetyl-CoA decarbonylase/synthase complex subunit alpha of Methanothrix soehngenii (Methanosaeta concilii).